Consider the following 386-residue polypeptide: Short integuments 2, mitochondrial (386 aa).

The CP-type G domain maps to 37–207 (TRAIRNRLKL…VLDSPGVLVP (171 aa)). The DARXP motif motif lies at 55 to 59 (DARIP). Positions 81–84 (NKKD) are G4. GTP contacts are provided by residues 81–84 (NKKD), 109–110 (NA), and 146–151 (NVGKSA). The segment at 109–111 (NAH) is G5. Positions 143-150 (GVPNVGKS) are G1. Residues 180-184 (GVTQD) form a G2 region. The tract at residues 200–203 (DSPG) is G3. G203 contributes to the GTP binding site.

It belongs to the TRAFAC class YlqF/YawG GTPase family. MTG1 subfamily. As to expression, expressed in seedlings, roots, leaves, stems, inflorescences and siliques.

Its subcellular location is the mitochondrion. Functionally, GTPase that may function in mitochondrial ribosome assembly. Involved in a variety of growth processes during vegetative development and promotes growth and cell division in the developing integuments. The polypeptide is Short integuments 2, mitochondrial (Arabidopsis thaliana (Mouse-ear cress)).